The following is a 647-amino-acid chain: Probable inactive receptor kinase RLK902 (647 aa).

The N-terminal stretch at Met1–Gly29 is a signal peptide. LRR repeat units follow at residues Gly69 to Asn93, Leu94 to Cys118, Ser119 to Leu142, Asn144 to Asn165, and Leu166 to Gln192. The helical transmembrane segment at Gly268–Phe288 threads the bilayer. One can recognise a Protein kinase domain in the interval Arg365–Arg639. A Phosphoserine modification is found at Ser367. Residue Leu371–Ala379 coordinates ATP. A Phosphothreonine modification is found at Thr388. Lys393 contacts ATP. Residue Ser444 is modified to Phosphoserine. Thr520 is subject to Phosphothreonine. Ser540 is modified (phosphoserine). At Thr618 the chain carries Phosphothreonine.

Belongs to the protein kinase superfamily. Ser/Thr protein kinase family. As to quaternary structure, interacts with At3g17950, At3g27210 and At5g05190. Autophosphorylation. Expressed in root tips, lateral root primordia, stipules, and floral organ abscission zones.

Its subcellular location is the cell membrane. The polypeptide is Probable inactive receptor kinase RLK902 (RLK902) (Arabidopsis thaliana (Mouse-ear cress)).